Reading from the N-terminus, the 209-residue chain is Large ribosomal subunit protein uL3 (209 aa).

The interval 126 to 148 (HGQSRGPMAHGSRYHRRPGSMGP) is disordered.

It belongs to the universal ribosomal protein uL3 family. Part of the 50S ribosomal subunit. Forms a cluster with proteins L14 and L19.

In terms of biological role, one of the primary rRNA binding proteins, it binds directly near the 3'-end of the 23S rRNA, where it nucleates assembly of the 50S subunit. This Listeria monocytogenes serotype 4b (strain CLIP80459) protein is Large ribosomal subunit protein uL3.